The sequence spans 75 residues: Putative sulfur carrier protein TsuB (75 aa).

C13 serves as the catalytic Cysteine persulfide intermediate.

The protein belongs to the sulfur carrier protein TusA family.

Functionally, involved in thiosulfate metabolism. The polypeptide is Putative sulfur carrier protein TsuB (Escherichia coli (strain K12)).